Reading from the N-terminus, the 58-residue chain is MQMFPPSPLFFFLQLLKQSSRRLEHTFVFLRNFSLMLLRYIGKKRRATRFWDPRRGTP.

In terms of tissue distribution, detected at low levels in the ductal cells of the salivary gland but not in the acinar cells (at protein level). Expressed in endometrium (at protein level). Expressed in epithelial cells within the acinar ducts of the prostate.

The protein is T-cell receptor gamma alternate reading frame protein of Homo sapiens (Human).